Consider the following 90-residue polypeptide: Guanine nucleotide-binding protein subunit gamma (90 aa).

Cys86 carries S-palmitoyl cysteine lipidation. Cys87 is modified (cysteine methyl ester). Residue Cys87 is the site of S-farnesyl cysteine attachment. Positions 88-90 (TIM) are cleaved as a propeptide — removed in mature form.

This sequence belongs to the G protein gamma family. In terms of assembly, g proteins are composed of 3 units, alpha, beta and gamma.

It localises to the membrane. This Kluyveromyces lactis (strain ATCC 8585 / CBS 2359 / DSM 70799 / NBRC 1267 / NRRL Y-1140 / WM37) (Yeast) protein is Guanine nucleotide-binding protein subunit gamma.